A 208-amino-acid polypeptide reads, in one-letter code: Calcyphosin-like protein (208 aa).

EF-hand domains are found at residues 39 to 74 (AGIK…YAVV), 75 to 110 (MEKE…PMSR), 111 to 146 (ARKE…KHHP), and 154 to 191 (SEEQ…VSAS). Asp-52, Asp-54, Asn-56, Thr-58, Glu-63, Asp-88, Asp-90, Asn-92, Thr-94, and Glu-99 together coordinate Ca(2+).

Its subcellular location is the cytoplasm. The chain is Calcyphosin-like protein (CAPSL) from Homo sapiens (Human).